The primary structure comprises 456 residues: Adenylosuccinate synthetase isozyme 2 (456 aa).

The segment covering 1-14 (MSISESSPAATSLP) has biased composition (polar residues). The interval 1–24 (MSISESSPAATSLPNGDCGRPRAR) is disordered. GTP-binding positions include 39 to 45 (GDEGKGK) and 67 to 69 (GHT). Asp40 functions as the Proton acceptor in the catalytic mechanism. Mg(2+)-binding residues include Asp40 and Gly67. Asp40 is a substrate binding site. IMP contacts are provided by residues 40–43 (DEGK), 65–68 (NAGH), Thr162, Arg176, Asn255, Thr270, and Arg334. His68 (proton donor) is an active-site residue. 330 to 336 (VTTGRKR) is a substrate binding site. GTP contacts are provided by residues Arg336, 362–364 (KLD), and 444–447 (GVGK).

The protein belongs to the adenylosuccinate synthetase family. In terms of assembly, homodimer. The cofactor is Mg(2+).

Its subcellular location is the cytoplasm. The protein resides in the mitochondrion. The enzyme catalyses IMP + L-aspartate + GTP = N(6)-(1,2-dicarboxyethyl)-AMP + GDP + phosphate + 2 H(+). It functions in the pathway purine metabolism; AMP biosynthesis via de novo pathway; AMP from IMP: step 1/2. With respect to regulation, inhibited competitively by AMP and IMP and non-competitively by fructose 1,6-bisphosphate. In terms of biological role, plays an important role in the de novo pathway and in the salvage pathway of purine nucleotide biosynthesis. Catalyzes the first committed step in the biosynthesis of AMP from IMP. This Mus musculus (Mouse) protein is Adenylosuccinate synthetase isozyme 2 (Adss2).